A 317-amino-acid chain; its full sequence is tRNA dimethylallyltransferase (317 aa).

Residue 14–21 (GPTAVGKT) participates in ATP binding. 16–21 (TAVGKT) lines the substrate pocket. The tract at residues 39–42 (DSMQ) is interaction with substrate tRNA.

Belongs to the IPP transferase family. In terms of assembly, monomer. Mg(2+) is required as a cofactor.

It carries out the reaction adenosine(37) in tRNA + dimethylallyl diphosphate = N(6)-dimethylallyladenosine(37) in tRNA + diphosphate. In terms of biological role, catalyzes the transfer of a dimethylallyl group onto the adenine at position 37 in tRNAs that read codons beginning with uridine, leading to the formation of N6-(dimethylallyl)adenosine (i(6)A). The sequence is that of tRNA dimethylallyltransferase from Bacillus mycoides (strain KBAB4) (Bacillus weihenstephanensis).